Consider the following 299-residue polypeptide: Tyrosine recombinase XerC (299 aa).

The Core-binding (CB) domain maps to 1 to 85 (MEQHLDAYCM…AVRGFYKYLN (85 aa)). Residues 106–285 (RLPKTLDTDR…DFQHLATVYD (180 aa)) enclose the Tyr recombinase domain. Residues arginine 146, lysine 170, histidine 237, arginine 240, and histidine 263 contribute to the active site. The active-site O-(3'-phospho-DNA)-tyrosine intermediate is tyrosine 272.

Belongs to the 'phage' integrase family. XerC subfamily. In terms of assembly, forms a cyclic heterotetrameric complex composed of two molecules of XerC and two molecules of XerD.

The protein localises to the cytoplasm. In terms of biological role, site-specific tyrosine recombinase, which acts by catalyzing the cutting and rejoining of the recombining DNA molecules. The XerC-XerD complex is essential to convert dimers of the bacterial chromosome into monomers to permit their segregation at cell division. It also contributes to the segregational stability of plasmids. The polypeptide is Tyrosine recombinase XerC (Pseudomonas syringae pv. tomato (strain ATCC BAA-871 / DC3000)).